Here is a 100-residue protein sequence, read N- to C-terminus: UPF0473 protein LMHCC_1068 (100 aa).

The protein belongs to the UPF0473 family.

The chain is UPF0473 protein LMHCC_1068 from Listeria monocytogenes serotype 4a (strain HCC23).